The sequence spans 57 residues: Large ribosomal subunit protein bL33 (57 aa).

The protein belongs to the bacterial ribosomal protein bL33 family.

This chain is Large ribosomal subunit protein bL33, found in Shewanella sp. (strain W3-18-1).